The sequence spans 431 residues: Sorting nexin-31 (431 aa).

One can recognise a PX domain in the interval 1-107; sequence MHICIPVTEE…DYFRKLQMDT (107 aa).

It belongs to the sorting nexin family.

In terms of biological role, may be involved in protein trafficking. The sequence is that of Sorting nexin-31 (snx31) from Xenopus laevis (African clawed frog).